Consider the following 529-residue polypeptide: FAD-binding monooxygenase BOA2 (529 aa).

FAD-binding positions include 58 to 61 (VWWK), 70 to 71 (DI), and Tyr76. An NADP(+)-binding site is contributed by 68–70 (ACD). NADP(+) contacts are provided by residues 198-204 (TGPSACQ) and 221-222 (RS).

The protein belongs to the FAD-binding monooxygenase family. The cofactor is FAD.

The protein operates within polyketide biosynthesis. FAD-binding monooxygenase; part of the gene cluster A that mediates the biosynthesis of botcinic acid and its botcinin derivatives, acetate-derived polyketides that contribute to virulence when combined with the sesquiterpene botrydial. Botcinic acid and its derivatives have been shown to induce chlorosis and necrosis during host plant infection, but also have antifungal activities. Two polyketide synthases, BOA6 and BOA9, are involved in the biosynthesis of botcinins. BOA6 mediates the formation of the per-methylated tetraketide core by condensation of four units of malonyl-CoA with one unit of acetyl-CoA, which would be methylated in activated methylene groups to yield a bicyclic acid intermediate that could then either be converted to botrylactone derivatives or lose the starter acetate unit through a retro-Claisen type C-C bond cleavage to yield botcinin derivatives. The second polyketide synthase, BOA9, is probably required for the biosynthesis of the tetraketide side chain of botcinins. The methyltransferase (MT) domain within BOA6 is probably responsible for the incorporation of four methyl groups. The trans-enoyl reductase BOA5 might take over the enoyl reductase function of BOA6 that misses an ER domain. The monooxygenases BOA2, BOA3 and BOA4 might be involved in further hydroxylations at C4, C5 and C8, whereas BOA7, close to BOA9, could potentially be involved in the hydroxylation at C4 in the side chain of botcinins. The polypeptide is FAD-binding monooxygenase BOA2 (Botryotinia fuckeliana (strain B05.10) (Noble rot fungus)).